The sequence spans 476 residues: Eukaryotic translation initiation factor 3 subunit L (476 aa).

The 196-residue stretch at D257–L452 folds into the PCI domain.

It belongs to the eIF-3 subunit L family. Component of the eukaryotic translation initiation factor 3 (eIF-3) complex.

The protein localises to the cytoplasm. In terms of biological role, component of the eukaryotic translation initiation factor 3 (eIF-3) complex, which is involved in protein synthesis of a specialized repertoire of mRNAs and, together with other initiation factors, stimulates binding of mRNA and methionyl-tRNAi to the 40S ribosome. The eIF-3 complex specifically targets and initiates translation of a subset of mRNAs involved in cell proliferation. This chain is Eukaryotic translation initiation factor 3 subunit L, found in Aspergillus fumigatus (strain CBS 144.89 / FGSC A1163 / CEA10) (Neosartorya fumigata).